Here is a 389-residue protein sequence, read N- to C-terminus: Gustatory receptor 68a (389 aa).

Residues 1 to 42 (MKIYQDIYPISKPSQIFAILPFYSGDVDDGFRFGGLGRWYGR) are Cytoplasmic-facing. A helical transmembrane segment spans residues 43-63 (LVALIILIGSLTLGEDVLFAS). The Extracellular portion of the chain corresponds to 64 to 82 (KEYRLVASAQGDTEEINRT). An N-linked (GlcNAc...) asparagine glycan is attached at Asn80. A helical transmembrane segment spans residues 83 to 103 (IETLLCIISYTMVVLSSVQNA). At 104–133 (SRHFRTLHDIAKIDEYLLANGFRETYSCRN) the chain is on the cytoplasmic side. A helical transmembrane segment spans residues 134 to 154 (LTILVTSAAGGVLAVAFYYIH). The Extracellular segment spans residues 155–164 (YRSGIGAKRQ). A helical membrane pass occupies residues 165-185 (IILLLIYFLQLLYSTLLALYL). At 186 to 236 (RTLMMNLAQRIGFLNQKLDTFNLQDCGHMENWRELSNLIEVLCKFRYITEN) the chain is on the cytoplasmic side. The chain crosses the membrane as a helical span at residues 237–257 (INCVAGVSLLFYFGFSFYTVT). Residue Asn258 is glycosylated (N-linked (GlcNAc...) asparagine). The Extracellular segment spans residues 258–281 (NQSYLAFATLTAGSLSSKTEVADT). Residues 282–302 (IGLSCIWVLAETITMIVICSA) form a helical membrane-spanning segment. At 303–352 (CDGLASEVNGTAQILARIYGKSKQFQNLIDKFLTKSIKQDLQFTAYGFFS) the chain is on the cytoplasmic side. The chain crosses the membrane as a helical span at residues 353-373 (IDNSTLFKIFSAVTTYLVILI). The Extracellular portion of the chain corresponds to 374–389 (QFKQLEDSKVEDISQA).

This sequence belongs to the insect chemoreceptor superfamily. Gustatory receptor (GR) family. Gr21a subfamily. In terms of tissue distribution, expressed in chemosensory neurons of about 20 male-specific gustatory bristles in the forelegs. No expression is seen in the mechanosensory neurons. In larvae, expressed in the ventral pharyngeal sense organ.

It is found in the cell membrane. Functionally, dsx-dependent essential component of pheromone-driven courtship behavior. Recognizes a female pheromone involved in the second step (tapping step) of the courtship display which is essential for efficient execution of the entire courtship sequence and timely mating. Required for detection of the male sex pheromone CH503 which is transferred from males to females during mating and inhibits courtship behavior by other males. Gr68a-expressing neurons in the male foreleg relay signals to the suboesophageal zone (SEZ) and courtship suppression is mediated by the release of the neuropeptide tachykinin from a cluster of 8-10 neurons in the SEZ. This chain is Gustatory receptor 68a (Gr68a), found in Drosophila melanogaster (Fruit fly).